Here is a 333-residue protein sequence, read N- to C-terminus: tRNA pseudouridine synthase B (333 aa).

Asp-46 functions as the Nucleophile in the catalytic mechanism.

The protein belongs to the pseudouridine synthase TruB family. Type 1 subfamily.

It carries out the reaction uridine(55) in tRNA = pseudouridine(55) in tRNA. Its function is as follows. Responsible for synthesis of pseudouridine from uracil-55 in the psi GC loop of transfer RNAs. The chain is tRNA pseudouridine synthase B from Gluconobacter oxydans (strain 621H) (Gluconobacter suboxydans).